The chain runs to 776 residues: Protein SEY1 (776 aa).

Residues 1–681 (MADRPAIQLI…KRSIITTRTH (681 aa)) lie on the Cytoplasmic side of the membrane. The GB1/RHD3-type G domain occupies 34 to 263 (GLDYHVISVF…TENYYFKPQY (230 aa)). A GTP-binding site is contributed by 44 to 51 (GSQSSGKS). The helical transmembrane segment at 682–702 (IPPWIYVLLAVLGWNEFVAVI) threads the bilayer. The Lumenal portion of the chain corresponds to 703-705 (RNP). A helical membrane pass occupies residues 706 to 726 (LFVTLTLILGATFFVIHKFGL). The Cytoplasmic portion of the chain corresponds to 727-776 (WGPVVNVVQSAVGETRTAIKDKLRQFVVEDHEVKESFEMKDFSKNEQKEK).

The protein belongs to the TRAFAC class dynamin-like GTPase superfamily. GB1/RHD3 GTPase family. RHD3 subfamily. In terms of assembly, interacts with RTN1 and YOP1; GTP binding is not required for these interactions.

It is found in the endoplasmic reticulum membrane. Functionally, cooperates with the reticulon proteins RTN1 and RTN2 and the tubule-shaping DP1 family protein YOP1 to generate and maintain the structure of the tubular endoplasmic reticulum network. Has GTPase activity, which is required for its function in ER organization. The sequence is that of Protein SEY1 from Saccharomyces cerevisiae (strain ATCC 204508 / S288c) (Baker's yeast).